Consider the following 271-residue polypeptide: Putative phosphoenolpyruvate synthase regulatory protein (271 aa).

Residue 151–158 (GVSRSGKT) coordinates ADP.

The protein belongs to the pyruvate, phosphate/water dikinase regulatory protein family. PSRP subfamily.

The catalysed reaction is [pyruvate, water dikinase] + ADP = [pyruvate, water dikinase]-phosphate + AMP + H(+). It catalyses the reaction [pyruvate, water dikinase]-phosphate + phosphate + H(+) = [pyruvate, water dikinase] + diphosphate. In terms of biological role, bifunctional serine/threonine kinase and phosphorylase involved in the regulation of the phosphoenolpyruvate synthase (PEPS) by catalyzing its phosphorylation/dephosphorylation. This Burkholderia thailandensis (strain ATCC 700388 / DSM 13276 / CCUG 48851 / CIP 106301 / E264) protein is Putative phosphoenolpyruvate synthase regulatory protein.